A 117-amino-acid chain; its full sequence is Replication initiation control protein YabA (117 aa).

The disordered stretch occupies residues Asn-45 to Asp-81. 2 stretches are compositionally biased toward basic and acidic residues: residues Gln-46–Glu-62 and Gly-72–Asp-81. The Zn(2+) site is built by His-92, Cys-94, Cys-107, and Cys-110.

It belongs to the YabA family. Homotetramer. Interacts with both DnaA and DnaN, acting as a bridge between these two proteins. It depends on Zn(2+) as a cofactor.

Its subcellular location is the cytoplasm. The protein resides in the nucleoid. Functionally, involved in control of chromosome replication initiation. Inhibits the cooperative binding of DnaA to the oriC region, thus negatively regulating initiation of chromosome replication. Inhibits the ability of DnaA-ATP to form a helix on DNA; does not disassemble preformed DnaA-DNA helices. Decreases the residence time of DnaA on the chromosome at its binding sites (oriC, replication forks and promoter-binding sites). Tethers DnaA to the replication machinery via the DNA polymerase beta sliding clamp subunit (dnaN). Associates with oriC and other DnaA targets on the chromosome in a DnaA-dependent manner. The protein is Replication initiation control protein YabA of Bacillus pumilus (strain SAFR-032).